The following is a 509-amino-acid chain: Histidine--tRNA ligase, cytoplasmic (509 aa).

Residue alanine 2 is modified to N-acetylalanine. The WHEP-TRS domain occupies 3–59; sequence DRAALEDLVRVQGERVRGLKQQKASAEQIEEEVAKLLKLKAQLGPDEGKPKFVLKTP. The residue at position 66 (serine 66) is a Phosphoserine. L-histidine-binding positions include 130 to 132, arginine 157, glutamine 173, aspartate 177, arginine 326, and 330 to 331; these read DLT and YY. Phosphoserine is present on serine 356.

Belongs to the class-II aminoacyl-tRNA synthetase family. In terms of assembly, homodimer.

It is found in the cytoplasm. It catalyses the reaction tRNA(His) + L-histidine + ATP = L-histidyl-tRNA(His) + AMP + diphosphate + H(+). Catalyzes the ATP-dependent ligation of histidine to the 3'-end of its cognate tRNA, via the formation of an aminoacyl-adenylate intermediate (His-AMP). Plays a role in axon guidance. The chain is Histidine--tRNA ligase, cytoplasmic (HARS1) from Bos taurus (Bovine).